The primary structure comprises 183 residues: UPF0398 protein BLi02355/BL05236 (183 aa).

It belongs to the UPF0398 family.

This Bacillus licheniformis (strain ATCC 14580 / DSM 13 / JCM 2505 / CCUG 7422 / NBRC 12200 / NCIMB 9375 / NCTC 10341 / NRRL NRS-1264 / Gibson 46) protein is UPF0398 protein BLi02355/BL05236.